The primary structure comprises 118 residues: Iron-sulfur cluster assembly protein CyaY (118 aa).

This sequence belongs to the frataxin family.

In terms of biological role, involved in iron-sulfur (Fe-S) cluster assembly. May act as a regulator of Fe-S biogenesis. The protein is Iron-sulfur cluster assembly protein CyaY of Buchnera aphidicola subsp. Baizongia pistaciae (strain Bp).